We begin with the raw amino-acid sequence, 380 residues long: Probable inactive dehydrogenase easA (380 aa).

FMN contacts are provided by residues 25–27 (PMT), alanine 60, glutamine 102, and histidine 171. Positions 171 and 174 each coordinate substrate. FMN is bound by residues lysine 223, glycine 299, 324 to 325 (GR), and arginine 325. Residue tyrosine 352 participates in substrate binding.

It belongs to the NADH:flavin oxidoreductase/NADH oxidase family.

Probable inactive dehydrogenase; part of the gene cluster that mediates the biosynthesis of fungal ergot alkaloid. DmaW catalyzes the first step of ergot alkaloid biosynthesis by condensing dimethylallyl diphosphate (DMAP) and tryptophan to form 4-dimethylallyl-L-tryptophan. The second step is catalyzed by the methyltransferase easF that methylates 4-dimethylallyl-L-tryptophan in the presence of S-adenosyl-L-methionine, resulting in the formation of 4-dimethylallyl-L-abrine. The catalase easC and the FAD-dependent oxidoreductase easE then transform 4-dimethylallyl-L-abrine to chanoclavine-I which is further oxidized by easD in the presence of NAD(+), resulting in the formation of chanoclavine-I aldehyde. Agroclavine dehydrogenase easG then mediates the conversion of chanoclavine-I aldehyde to agroclavine via a non-enzymatic adduct reaction: the substrate is an iminium intermediate that is formed spontaneously from chanoclavine-I aldehyde in the presence of glutathione. The presence of easA is not required to complete this reaction. Further conversion of agroclavine to paspalic acid is a two-step process involving oxidation of agroclavine to elymoclavine and of elymoclavine to paspalic acid, the second step being performed by the elymoclavine oxidase cloA. Paspalic acid is then further converted to D-lysergic acid. Ergopeptines are assembled from D-lysergic acid and three different amino acids by the D-lysergyl-peptide-synthetases composed each of a monomudular and a trimodular nonribosomal peptide synthetase subunit. LpsB and lpsC encode the monomodular subunits responsible for D-lysergic acid activation and incorporation into the ergopeptine backbone. LpsA1 and A2 subunits encode the trimodular nonribosomal peptide synthetase assembling the tripeptide portion of ergopeptines. LpsA1 is responsible for formation of the major ergopeptine, ergotamine, and lpsA2 for alpha-ergocryptine, the minor ergopeptine of the total alkaloid mixture elaborated by C.purpurea. D-lysergyl-tripeptides are assembled by the nonribosomal peptide synthetases and released as N-(D-lysergyl-aminoacyl)-lactams. Cyclolization of the D-lysergyl-tripeptides is performed by the Fe(2+)/2-ketoglutarate-dependent dioxygenase easH which introduces a hydroxyl group into N-(D-lysergyl-aminoacyl)-lactam at alpha-C of the aminoacyl residue followed by spontaneous condensation with the terminal lactam carbonyl group. The polypeptide is Probable inactive dehydrogenase easA (Claviceps purpurea (strain 20.1) (Ergot fungus)).